The chain runs to 671 residues: MERVNHTDFERIQQLRAELVAANNAYYREDSPTLSDAEYDARLRELRTLEDRNPQWQSADSPTQRVGAAPVEVFGEVHYAIPLTSLDNVFDQDGFSDWLARVQKGLGREDVPLSAEPKFDGLSVNIRYIEGKLVQAGTRGDGQTGEDVTANVRTIRNVPLQLTGKDWPELLEVRGEVVIPVAAFRRLNGERLRAGDNPFANPRNAAAGSLRQLDSSVTAKRPLAYFPWGWGESSVPLGKSHIAVMERLSAWGFEVTSYLRGVHELTECQRYFSEMQKIREGMPFEIDGLVFKVDDLLAREQLGFTARAPRWAIAYKFPAHEERTVVEDILASVGRTGVITPVAVLKPVQVGGVTVSRASLHNQDEVDRKDIRVGDTVLVRRAGDVIPEVVMVIKEERPPATQPWHMPQRCPVCGSEVLRLANESAHRCMGGLYCPAQRMGAIRHFASRRAMDIRGLGEKLVEQLVGHGLVHTVADIYHLDEAALCGLERMASRSAQKLLAEIDRSRHTSLPRFLYALGIRQVGEGTAKSLAIYFGDLDPLMAATPELLQNIPDVGPIVAESVAHFFAQPHNRDVIAALRAAGVQWAVVQPQKGGRFQGMTLVLTGALDNMTREEAKTAIENAGGKVSGSVSAKTSYVVVGKDPGSKAEKAAKLGVKQLTEAQFLAMFSEKE.

NAD(+)-binding positions include 36–40 (DAEYD), 85–86 (SL), and Glu116. Lys118 functions as the N6-AMP-lysine intermediate in the catalytic mechanism. Arg139, Glu176, Lys292, and Lys316 together coordinate NAD(+). Zn(2+)-binding residues include Cys410, Cys413, Cys428, and Cys434. Positions 591–671 (QKGGRFQGMT…QFLAMFSEKE (81 aa)) constitute a BRCT domain.

Belongs to the NAD-dependent DNA ligase family. LigA subfamily. Requires Mg(2+) as cofactor. The cofactor is Mn(2+).

It carries out the reaction NAD(+) + (deoxyribonucleotide)n-3'-hydroxyl + 5'-phospho-(deoxyribonucleotide)m = (deoxyribonucleotide)n+m + AMP + beta-nicotinamide D-nucleotide.. DNA ligase that catalyzes the formation of phosphodiester linkages between 5'-phosphoryl and 3'-hydroxyl groups in double-stranded DNA using NAD as a coenzyme and as the energy source for the reaction. It is essential for DNA replication and repair of damaged DNA. The protein is DNA ligase of Acidithiobacillus ferrooxidans (strain ATCC 23270 / DSM 14882 / CIP 104768 / NCIMB 8455) (Ferrobacillus ferrooxidans (strain ATCC 23270)).